The following is a 616-amino-acid chain: Dihydroxy-acid dehydratase (616 aa).

Asp81 is a Mg(2+) binding site. Residue Cys122 participates in [2Fe-2S] cluster binding. 2 residues coordinate Mg(2+): Asp123 and Lys124. Lys124 carries the post-translational modification N6-carboxylysine. A [2Fe-2S] cluster-binding site is contributed by Cys195. Glu491 is a Mg(2+) binding site. The active-site Proton acceptor is the Ser517.

Belongs to the IlvD/Edd family. In terms of assembly, homodimer. [2Fe-2S] cluster is required as a cofactor. Requires Mg(2+) as cofactor.

It carries out the reaction (2R)-2,3-dihydroxy-3-methylbutanoate = 3-methyl-2-oxobutanoate + H2O. It catalyses the reaction (2R,3R)-2,3-dihydroxy-3-methylpentanoate = (S)-3-methyl-2-oxopentanoate + H2O. It participates in amino-acid biosynthesis; L-isoleucine biosynthesis; L-isoleucine from 2-oxobutanoate: step 3/4. It functions in the pathway amino-acid biosynthesis; L-valine biosynthesis; L-valine from pyruvate: step 3/4. Functionally, functions in the biosynthesis of branched-chain amino acids. Catalyzes the dehydration of (2R,3R)-2,3-dihydroxy-3-methylpentanoate (2,3-dihydroxy-3-methylvalerate) into 2-oxo-3-methylpentanoate (2-oxo-3-methylvalerate) and of (2R)-2,3-dihydroxy-3-methylbutanoate (2,3-dihydroxyisovalerate) into 2-oxo-3-methylbutanoate (2-oxoisovalerate), the penultimate precursor to L-isoleucine and L-valine, respectively. This Shigella boydii serotype 4 (strain Sb227) protein is Dihydroxy-acid dehydratase.